Reading from the N-terminus, the 162-residue chain is uncharacterized protein (162 aa).

This is an uncharacterized protein from Sputnik virophage.